A 406-amino-acid chain; its full sequence is Collagen and calcium-binding EGF domain-containing protein 1 (406 aa).

Positions 1–34 are cleaved as a signal peptide; sequence MVPPPPSRGGAARGQLGRSLGPLLLLLALGHTWT. One can recognise an EGF-like; calcium-binding domain in the interval 134–175; sequence DIDECASSNGTLCAHICINTLGSYRCECREGYIREDDGKTCT. Cystine bridges form between Cys-138/Cys-150, Cys-146/Cys-159, and Cys-161/Cys-174. The N-linked (GlcNAc...) asparagine glycan is linked to Asn-142. A glycan (N-linked (GlcNAc...) asparagine) is linked at Asn-182. Disordered regions lie at residues 244 to 335 and 360 to 406; these read YLPG…PGSF and RTHS…DFYP. 2 Collagen-like domains span residues 245-290 and 300-333; these read LPGP…PMGP and GRRG…GPPG. Residues 270–279 show a composition bias toward pro residues; the sequence is PGMPGPPGQP. Residues 281–292 are compositionally biased toward low complexity; it reads PRGSMGPMGPSP. O-linked (Xyl...) (chondroitin sulfate) serine glycosylation occurs at Ser-385. A compositionally biased stretch (basic and acidic residues) spans 386-406; sequence GDDHPRRTETRDLRAPRDFYP.

This sequence belongs to the CCBE1 family. As to expression, detected in fibroblasts and urine (at protein level). Not expressed in blood or lymphatic endothelial cells.

The protein localises to the secreted. In terms of biological role, required for lymphangioblast budding and angiogenic sprouting from venous endothelium during embryogenesis. The chain is Collagen and calcium-binding EGF domain-containing protein 1 (CCBE1) from Homo sapiens (Human).